We begin with the raw amino-acid sequence, 1290 residues long: Nonribosomal peptide synthetase 6 (1290 aa).

Residues 1–27 (MTAIDVPWLSTPRRDNSHGTRSNSSCQ) form a disordered region. Residues 260–657 (SYQELDCQAS…AQVEHHLRSC (398 aa)) are adenylation. Residues 775-851 (APETELERKL…GLAQTHRHPV (77 aa)) form the Carrier domain. At S812 the chain carries O-(pantetheine 4'-phosphoryl)serine. Residues 846–870 (THRHPVRRAEVPRSSHDPDPFGRVR) are disordered. Residues 852 to 870 (RRAEVPRSSHDPDPFGRVR) show a composition bias toward basic and acidic residues. The tract at residues 914-1162 (GGQLDPEQLR…PCMNIIPVRV (249 aa)) is condensation.

It belongs to the NRP synthetase family.

Its function is as follows. Nonribosomal peptide synthesis (NRPS) is a key mechanism responsible for the biosynthesis of bioactive metabolites which are potentially contributing to organismal virulence. The chain is Nonribosomal peptide synthetase 6 (NRPS6) from Aspergillus fumigatus (strain ATCC MYA-4609 / CBS 101355 / FGSC A1100 / Af293) (Neosartorya fumigata).